A 591-amino-acid polypeptide reads, in one-letter code: Autotransporter adhesin NhhA (591 aa).

Residues 1–51 (MNKIYRIIWNSALNAWVVVSELTRNHTKRASATVKTAVLATLLFATVQASA) form the signal peptide. A surface exposed passenger domain region spans residues 52 to 503 (NNEEQEEDLY…TNVAQLKGVA (452 aa)). The segment at 504–591 (QNLNNRIDNV…GASASVGYQW (88 aa)) is translocator domain. The next 4 beta stranded transmembrane spans lie at 537–547 (GKSMMAIGGGT), 551–561 (EAGYAIGYSSI), 570–576 (KGTASGN), and 580–591 (HFGASASVGYQW).

Belongs to the autotransporter-2 (AT-2) (TC 1.B.40) family. As to quaternary structure, homotrimer.

It is found in the cell surface. The protein resides in the cell outer membrane. Its function is as follows. Involved in adhesion of capsulated meningococci to host epithelial cells. Interacts with laminin and heparan sulfate, promoting the adherence to the extracellular matrix (ECM) components. The polypeptide is Autotransporter adhesin NhhA (Neisseria meningitidis serogroup B (strain ATCC BAA-335 / MC58)).